The primary structure comprises 226 residues: SPI-1 type 3 secretion system stator protein (226 aa).

The core secretion machinery of the T3SS is composed of approximately 20 different proteins, including cytoplasmic components, a base, an export apparatus and a needle. This subunit is part of the cytosolic complex. Interacts directly with InvC/SctN1 (T3SS-1 ATPase) and SpaO/SctQ (the major sorting platform component).

It localises to the cytoplasm. Its function is as follows. Component of the type III secretion system (T3SS), also called injectisome, which is used to inject bacterial effector proteins into eukaryotic host cells. Acts as a regulator of the InvC/SctN1 ATPase activity. Required for invasion and secretion. This is SPI-1 type 3 secretion system stator protein from Salmonella typhimurium (strain SL1344).